We begin with the raw amino-acid sequence, 202 residues long: Small ribosomal subunit protein uS4c (202 aa).

Residues 89 to 152 (MRLDNIIFRL…QSNTFINNCI (64 aa)) form the S4 RNA-binding domain.

It belongs to the universal ribosomal protein uS4 family. Part of the 30S ribosomal subunit. Contacts protein S5. The interaction surface between S4 and S5 is involved in control of translational fidelity.

Its subcellular location is the plastid. Its function is as follows. One of the primary rRNA binding proteins, it binds directly to 16S rRNA where it nucleates assembly of the body of the 30S subunit. With S5 and S12 plays an important role in translational accuracy. The protein is Small ribosomal subunit protein uS4c (rps4) of Epifagus virginiana (Beechdrops).